Reading from the N-terminus, the 385-residue chain is 8-amino-7-oxononanoate synthase (385 aa).

Arg21 provides a ligand contact to substrate. 108–109 contacts pyridoxal 5'-phosphate; that stretch reads GF. His133 serves as a coordination point for substrate. Residues Ser179, His207, and Thr233 each contribute to the pyridoxal 5'-phosphate site. At Lys236 the chain carries N6-(pyridoxal phosphate)lysine. Residue Thr352 participates in substrate binding.

This sequence belongs to the class-II pyridoxal-phosphate-dependent aminotransferase family. BioF subfamily. As to quaternary structure, homodimer. It depends on pyridoxal 5'-phosphate as a cofactor.

The enzyme catalyses 6-carboxyhexanoyl-[ACP] + L-alanine + H(+) = (8S)-8-amino-7-oxononanoate + holo-[ACP] + CO2. The protein operates within cofactor biosynthesis; biotin biosynthesis. Functionally, catalyzes the decarboxylative condensation of pimeloyl-[acyl-carrier protein] and L-alanine to produce 8-amino-7-oxononanoate (AON), [acyl-carrier protein], and carbon dioxide. The protein is 8-amino-7-oxononanoate synthase of Salmonella paratyphi B (strain ATCC BAA-1250 / SPB7).